Consider the following 170-residue polypeptide: Fibroblast growth factor 2 (170 aa).

Residues 1–21 (VGGRGRGRGTAAAARREPGGA) form a disordered region. 3 positions are modified to omega-N-methylarginine; alternate: R4, R6, and R8. Symmetric dimethylarginine; alternate occurs at positions 4, 6, and 8. Low complexity predominate over residues 9-21 (GTAAAARREPGGA). A heparin-binding site is contributed by N51. Y97 bears the Phosphotyrosine; by TEC mark. A Glycyl lysine isopeptide (Lys-Gly) (interchain with G-Cter in SUMO1) cross-link involves residue K110. Residues 143 to 159 (KRTGQYKLGSKTGPGQK) form a heparin-binding region.

The protein belongs to the heparin-binding growth factors family. Monomer. Homodimer. Interacts with FGFR1, FGFR2, FGFR3 and FGFR4. Affinity between fibroblast growth factors (FGFs) and their receptors is increased by heparan sulfate glycosaminoglycans that function as coreceptors. Interacts with CSPG4, FGFBP1 and TEC. Found in a complex with FGFBP1, FGF1 and FGF2. Interacts with FGFBP3. Interacts with integrin ITGAV:ITGB3; the interaction is required for FGF2 signaling. Interacts with SNORC (via the extracellular domain). Interacts with glypican GPC3. In terms of processing, the N-terminus of isoform 2 is blocked. Phosphorylation at Tyr-97 regulates FGF2 unconventional secretion.

It localises to the secreted. The protein resides in the nucleus. In terms of biological role, acts as a ligand for FGFR1, FGFR2, FGFR3 and FGFR4. Also acts as an integrin ligand which is required for FGF2 signaling. Binds to integrin ITGAV:ITGB3. Plays an important role in the regulation of cell survival, cell division, cell differentiation and cell migration. Functions as a potent mitogen in vitro. Can induce angiogenesis. Mediates phosphorylation of ERK1/2 and thereby promotes retinal lens fiber differentiation. The chain is Fibroblast growth factor 2 (FGF2) from Cavia porcellus (Guinea pig).